A 2061-amino-acid chain; its full sequence is Putative PWWP domain-containing DNA repair factor 4 (2061 aa).

Disordered regions lie at residues 101-211 (TNLG…SRAR), 382-408 (ALGRDRSRARSAIASTPGTLQGNRSSV), 541-586 (TPGT…GDGS), 668-694 (PATLRGEKSRAHTSLAPAPGALRGDGS), 864-910 (PTPG…SERS), 1046-1072 (PGTMRGDSSTARTATAPSPGALRGDRS), 1159-1182 (ALHGDSSQAHTAIAPTPGTMRGDS), 1205-1383 (KAIA…RDDK), 1521-1548 (PGALHSDRSQTHTAIDPTPSVLRSDSSP), and 1602-1726 (KKGK…KLAN). 2 stretches are compositionally biased toward basic and acidic residues: residues 133–153 (PREDDWRCKGDLRRSLGKREN) and 162–173 (ESKRALRDDRSQ). Residues 397 to 408 (TPGTLQGNRSSV) show a composition bias toward polar residues. The span at 1051–1061 (GDSSTARTATA) shows a compositional bias: polar residues. The segment covering 1364 to 1373 (DSSQVHTTIA) has biased composition (polar residues). The span at 1639–1648 (LKEETQDSRP) shows a compositional bias: basic and acidic residues. Residues 1656 to 1665 (PESSPFSGNI) show a composition bias toward polar residues. In terms of domain architecture, PWWP spans 1756–1817 (RGTMVWFKFQ…KHLDCKEKEK (62 aa)).

This sequence belongs to the PWWP3A family.

The chain is Putative PWWP domain-containing DNA repair factor 4 from Homo sapiens (Human).